Here is a 152-residue protein sequence, read N- to C-terminus: Endoribonuclease YbeY (152 aa).

Residues H114, H118, and H124 each contribute to the Zn(2+) site.

It belongs to the endoribonuclease YbeY family. It depends on Zn(2+) as a cofactor.

It localises to the cytoplasm. Its function is as follows. Single strand-specific metallo-endoribonuclease involved in late-stage 70S ribosome quality control and in maturation of the 3' terminus of the 16S rRNA. This is Endoribonuclease YbeY from Coxiella burnetii (strain CbuK_Q154) (Coxiella burnetii (strain Q154)).